We begin with the raw amino-acid sequence, 1336 residues long: Immunoglobulin superfamily member 1 (1336 aa).

Positions 1 to 28 (MTLDRPGEGATMLKTFTVLLFCIRMSLG) are cleaved as a signal peptide. At 29 to 518 (MTSIVMDPQP…GYLTWNYVLN (490 aa)) the chain is on the extracellular side. Ig-like C2-type domains follow at residues 38 to 122 (PELW…KVLE), 137 to 222 (QAET…LVVA), 226 to 312 (PKPT…SDVL), 321 to 408 (PKTW…PSHN), and 419 to 500 (PKPS…HRSE). Asparagine 53 carries N-linked (GlcNAc...) asparagine glycosylation. Cysteine 58 and cysteine 106 form a disulfide bridge. A disulfide bridge connects residues cysteine 248 and cysteine 296. Residues asparagine 338, asparagine 374, and asparagine 381 are each glycosylated (N-linked (GlcNAc...) asparagine). Intrachain disulfides connect cysteine 343–cysteine 392 and cysteine 441–cysteine 484. Residues 519-539 (EAIRLSLIMQLVALLLVVLWI) traverse the membrane as a helical segment. The Cytoplasmic portion of the chain corresponds to 540-559 (RWKCRRLRIREAWLLGTAQG). Residues 560–580 (VTMLFIVTALLCCGLCNGVLI) traverse the membrane as a helical segment. At 581–1336 (EETEIVMPTP…RISVELPVPI (756 aa)) the chain is on the extracellular side. Ig-like C2-type domains follow at residues 589–677 (TPKP…ALEL), 686–760 (PVIS…RPFK), 777–869 (PKPF…LVVT), 873–958 (PKPT…YLSM), 965–1060 (TDTF…ELLV), 1065–1150 (PKPS…NHSD), and 1161–1242 (PKPS…EPSD). 8 N-linked (GlcNAc...) asparagine glycosylation sites follow: asparagine 607, asparagine 747, asparagine 798, asparagine 846, asparagine 939, asparagine 986, asparagine 1027, and asparagine 1082. A disulfide bond links cysteine 703 and cysteine 750. Cystine bridges form between cysteine 799–cysteine 849 and cysteine 895–cysteine 942. Cysteines 1087 and 1134 form a disulfide. Asparagine 1147 and asparagine 1223 each carry an N-linked (GlcNAc...) asparagine glycan. Cysteine 1183 and cysteine 1226 form a disulfide bridge. Residues 1308–1336 (CNQEGEPGTPANSPSSTSQRISVELPVPI) are disordered. The span at 1317-1328 (PANSPSSTSQRI) shows a compositional bias: polar residues.

As to quaternary structure, interacts with INHA. In PubMed:12385827 does not interact with INHA; standard receptor binding assay. Interacts with ACVR1B; the interaction appears to be ligand-dependent as it is diminished by inhibin B and activin A. Interacts with ACVR2A, ACVR2B, ACVRL1 and BMPR1B. Interacts with HECTD1. In terms of tissue distribution, highly expressed in pancreas, testis and fetal liver. Moderately expressed in heart, prostate and small intestine. Expressed at very low levels in brain, thymus, ovary, colon, fetal lung and fetal kidney. Expressed in muscle. Isoform 3 is expressed in pituitary gland.

It is found in the membrane. It localises to the secreted. Its function is as follows. Seems to be a coreceptor in inhibin signaling, but seems not to be a high-affinity inhibin receptor. Antagonizes activin A signaling in the presence or absence of inhibin B. Necessary to mediate a specific antagonistic effect of inhibin B on activin-stimulated transcription. The polypeptide is Immunoglobulin superfamily member 1 (IGSF1) (Homo sapiens (Human)).